A 197-amino-acid chain; its full sequence is Pyridoxal 5'-phosphate synthase subunit PdxT (197 aa).

52 to 54 (GES) contacts L-glutamine. C84 acts as the Nucleophile in catalysis. Residues R111 and 139–140 (IR) contribute to the L-glutamine site. Catalysis depends on charge relay system residues H175 and E177.

It belongs to the glutaminase PdxT/SNO family. In the presence of PdxS, forms a dodecamer of heterodimers. Only shows activity in the heterodimer.

It carries out the reaction aldehydo-D-ribose 5-phosphate + D-glyceraldehyde 3-phosphate + L-glutamine = pyridoxal 5'-phosphate + L-glutamate + phosphate + 3 H2O + H(+). The catalysed reaction is L-glutamine + H2O = L-glutamate + NH4(+). It functions in the pathway cofactor biosynthesis; pyridoxal 5'-phosphate biosynthesis. In terms of biological role, catalyzes the hydrolysis of glutamine to glutamate and ammonia as part of the biosynthesis of pyridoxal 5'-phosphate. The resulting ammonia molecule is channeled to the active site of PdxS. The sequence is that of Pyridoxal 5'-phosphate synthase subunit PdxT from Halorubrum lacusprofundi (strain ATCC 49239 / DSM 5036 / JCM 8891 / ACAM 34).